Reading from the N-terminus, the 217-residue chain is Small ribosomal subunit protein uS3 (217 aa).

One can recognise a KH type-2 domain in the interval 38-106; it reads IRKYIDNALQ…KVHINVIEIK (69 aa).

It belongs to the universal ribosomal protein uS3 family. As to quaternary structure, part of the 30S ribosomal subunit. Forms a tight complex with proteins S10 and S14.

In terms of biological role, binds the lower part of the 30S subunit head. Binds mRNA in the 70S ribosome, positioning it for translation. The sequence is that of Small ribosomal subunit protein uS3 from Staphylococcus saprophyticus subsp. saprophyticus (strain ATCC 15305 / DSM 20229 / NCIMB 8711 / NCTC 7292 / S-41).